Reading from the N-terminus, the 33-residue chain is Kappa-theraphotoxin-Pg2a (33 aa).

3 disulfides stabilise this stretch: C2–C16, C9–C21, and C15–C28.

In terms of tissue distribution, expressed by the venom gland.

It localises to the secreted. Its function is as follows. Gating modifier of Kv2.1/KCNB1 channels. This is Kappa-theraphotoxin-Pg2a from Chilobrachys guangxiensis (Chinese earth tiger tarantula).